Here is a 1430-residue protein sequence, read N- to C-terminus: Caskin-1 (1430 aa).

ANK repeat units lie at residues 48-77 (DGFSALHHAALNGNTELISLLLEAQAAVDI), 81-110 (KGMRPLHYAAWQGRKEPMKLVLKAGSAVNV), 114-143 (EGHIPLHLAAQHGHYDVSEMLLQHQSNPCI), 147-176 (SGKTPLDLACEFGRVGVVQLLLSSNMCAAL), 188-217 (NGTSPLHLAAKNGHIDIIRLLLQAGIDINR), and 220-249 (KSGTALHEAALCGKTEVVRLLLDSGINAQV). Tyr-253 is modified (phosphotyrosine). Positions 281-347 (SAALQVRATK…PSSLGEAIVK (67 aa)) constitute an SH3 domain. Residues 348-372 (RAGSRTGSEPSPPQGGGSLGPSAPP) form a disordered region. Ser-358 is modified (phosphoserine). The segment at 375 to 471 (IWVLRKPFAG…PKKLESSSAS (97 aa)) is CASK-binding. Residue Arg-398 is modified to Omega-N-methylarginine. Residues 421–430 (QKSVSESSPG) show a composition bias toward polar residues. The disordered stretch occupies residues 421-472 (QKSVSESSPGDSPVKPPEGSSGAARSQPPAAHAGQVYGEQPPKKLESSSASE). A phosphoserine mark is found at Ser-423 and Ser-432. SAM domains lie at 474-537 (KSAE…LNIP) and 543-607 (HKPA…LAEL). A phosphoserine mark is found at Ser-635 and Ser-648. Low complexity predominate over residues 667-679 (LSGPAEAGAAAAE). 4 disordered regions span residues 667–1001 (LSGP…SAGS), 1015–1040 (GGGGRAIRRPPEGHPTPRPASPDPGR), 1055–1371 (GPDG…RQKL), and 1388–1407 (KIRQEDGQGPRPSSIEEKST). Residues 683–711 (NHLPATPRTTSRQESSLSGRARHMSSSQE) are compositionally biased toward polar residues. 2 positions are modified to phosphoserine: Ser-722 and Ser-727. Thr-740 carries the post-translational modification Phosphothreonine. Position 790 is a phosphoserine (Ser-790). Over residues 847–859 (PPAPGPVPPPVPA) the composition is skewed to pro residues. Phosphoserine is present on residues Ser-890, Ser-892, and Ser-988. Over residues 1027–1036 (GHPTPRPASP) the composition is skewed to pro residues. Thr-1066 is modified (phosphothreonine). Ser-1068 is modified (phosphoserine). The span at 1147–1159 (DTVKRRPKAKEPD) shows a compositional bias: basic and acidic residues. The segment covering 1190-1214 (PELPPPPPPAEPPPTDLMPLPPLPL) has biased composition (pro residues). Position 1258 is a phosphoserine (Ser-1258). Thr-1267 is subject to Phosphothreonine. The span at 1267–1282 (TPPPVSPKPPPPPTAP) shows a compositional bias: pro residues. 3 stretches are compositionally biased toward low complexity: residues 1283–1298 (KPAKALAGLQSSSATP), 1308–1326 (PPAALIKPASSPPSQSASP), and 1344–1358 (PRAAASVVSGPPVAS). The residue at position 1362 (Ser-1362) is a Phosphoserine. Residues 1388 to 1406 (KIRQEDGQGPRPSSIEEKS) show a composition bias toward basic and acidic residues.

As to quaternary structure, polymerizes, via the tandem SAM domains, to form long, 8 nM wide fibers, upon which other proteins can assemble. Binds the CaM kinase domain of CASK. Forms a ternary complex with CASK and LIN7A, LIN7B or LIN7C. Competes with APBA1 that forms a similar complex with CASK and LIN7 proteins. The tripartite complex CASKIN1/CASK/LIN7(A/B/C) binds the cytoplasmic tail of NRXN1. Expressed in brain. Localized primarily to the neuropil and enriched in synaptic areas (at protein level).

The protein localises to the cytoplasm. May link the scaffolding protein CASK to downstream intracellular effectors. The sequence is that of Caskin-1 (Caskin1) from Rattus norvegicus (Rat).